A 363-amino-acid polypeptide reads, in one-letter code: MAKVAKDLNPRVQKMSLGQQQSARGVPCLRCKGTCSGFEPHSWRKICKSCKCSQEDHCLSSDLEDDRKIGRLLMDSKYSTLTARVKGGDGIRIYKRNRMIMTNPIATGKDPTFDTITYEWAPPGVTQKLGLQYMELIPKEKQPVTGTEGALYRRRQLMHQLPIYDQDPSRCRGLLENELKVMEEFVKQYKSEALGVGEVALPGQGGLPKEEGKQQEKPEGAETAPPTTNGSIGDPSKEYVCELCKGVAPADSPVVYSDRAGYSKQWHPACFVCAKCSEPLVDLIYFWKDGAPWCGRHYCESLRPRCSGCDEIIFSEDYQRVEDLAWHRKHFVCEGCEQQLGGRAYIVTMGQLLCPTCSKSKRS.

Phosphoserine is present on serine 16. The PET domain maps to 99-206; that stretch reads MIMTNPIATG…GEVALPGQGG (108 aa). Residues 200-234 form a disordered region; that stretch reads ALPGQGGLPKEEGKQQEKPEGAETAPPTTNGSIGD. Positions 208 to 220 are enriched in basic and acidic residues; sequence PKEEGKQQEKPEG. LIM zinc-binding domains follow at residues 239 to 304 and 305 to 363; these read YVCE…SLRP and RCSG…SKRS.

Interacts with beta-dystroglycan. Interacts with GATA1, GATA4 and GATA6.

The protein resides in the cytoplasm. Its subcellular location is the nucleus. Functionally, transcriptional cofactor that restricts GATA6 function by inhibiting DNA-binding, resulting in repression of GATA6 transcriptional activation of downstream target genes. Represses GATA6-mediated trans activation of lung- and cardiac tissue-specific promoters. Inhibits DNA-binding by GATA4 and GATA1 to the cTNC promoter. Plays a critical role in the development of cardiac hypertrophy via activation of calcineurin/nuclear factor of activated T-cells signaling pathway. The polypeptide is LIM and cysteine-rich domains protein 1 (LMCD1) (Bos taurus (Bovine)).